A 353-amino-acid polypeptide reads, in one-letter code: MSITNSAIYTFPESSFSENGHIEPLPLKVNEQRKAVPHIRVAKIGNPPKHGSRYLDVFLLGFFEMERIKDKYGSVNDLDSDPGYKVCGSGSLPIGLAKYTGNDQELLQAATKLDIEVRRTVKAKEMIVYTVQNIKPELYPWSSRLRKGMLFDANKVALAPQCLPLDRSIKFRVIFVNCTAIGSITLFKIPKSMASLSLPSTISINLQVHIKTGVQTDSKGIVQILDEKGEKSLNFMVHLGLIKRKVGRMYSVEYCKQKIEKMRLIFSLGLVGGISLHVNATGSISKTLASQLVFKREICYPLMDLNPHLNLVIWASSVEITRVDAIFQPSLPGEFRYYPNIIAKGVGKIKQWN.

The protein belongs to the morbillivirus/respirovirus/rubulavirus M protein family.

The protein localises to the virion. Its function is as follows. The M protein has a crucial role in virus assembly and interacts with the RNP complex as well as with the viral membrane. The chain is Matrix protein (M) from Homo sapiens (Human).